A 485-amino-acid chain; its full sequence is Probable outer membrane usher protein LpfC' (485 aa).

Belongs to the fimbrial export usher family.

It localises to the cell outer membrane. Its function is as follows. Part of the lpfABCC'DE fimbrial operon. LP fimbriae may participate in the interaction with eukaryotic cells by assisting in microcolony formation. Could be involved in the export and assembly of the fimbrial subunits across the outer membrane. In Escherichia coli O157:H7, this protein is Probable outer membrane usher protein LpfC' (lpfC').